The primary structure comprises 396 residues: MDTRSSLCPKTQAVVAVFWGPGCHLSTCIEMFNITTQALGSAHNGTFSEVNCPDTEWWSWLNAIQAPFLWVLFLLAALENIFVLSVFCLHKTNCTVAEIYLGNLAAADLILACGLPFWAITIANNFDWLFGEVLCRVVNTMIYMNLYSSICFLMLVSIDRYLALVKTMSMGRMRGVRWAKLYSLVIWSCTLLLSSPMLVFRTMKDYREEGHNVTACVIVYPSRSWEVFTNMLLNLVGFLLPLSIITFCTVRIMQVLRNNEMKKFKEVQTEKKATVLVLAVLGLFVLCWFPFQISTFLDTLLRLGVLSGCWNERAVDIVTQISSYVAYSNSCLNPLVYVIVGKRFRKKSREVYQAICRKGGCMGESVQMENSMGTLRTSISVDRQIHKLQDWAGNKQ.

Over 1-65 (MDTRSSLCPK…EWWSWLNAIQ (65 aa)) the chain is Extracellular. 2 N-linked (GlcNAc...) asparagine glycosylation sites follow: N33 and N44. Residues 66–89 (APFLWVLFLLAALENIFVLSVFCL) traverse the membrane as a helical segment. At 90-98 (HKTNCTVAE) the chain is on the cytoplasmic side. The chain crosses the membrane as a helical span at residues 99 to 123 (IYLGNLAAADLILACGLPFWAITIA). The Extracellular segment spans residues 124-136 (NNFDWLFGEVLCR). A disulfide bridge links C135 with C216. A helical transmembrane segment spans residues 137-158 (VVNTMIYMNLYSSICFLMLVSI). Residues 159–180 (DRYLALVKTMSMGRMRGVRWAK) are Cytoplasmic-facing. Position 161 is a phosphotyrosine (Y161). The helical transmembrane segment at 181–203 (LYSLVIWSCTLLLSSPMLVFRTM) threads the bilayer. Residues 204–226 (KDYREEGHNVTACVIVYPSRSWE) are Extracellular-facing. Residue N212 is glycosylated (N-linked (GlcNAc...) asparagine). Residues 227 to 253 (VFTNMLLNLVGFLLPLSIITFCTVRIM) form a helical membrane-spanning segment. The Cytoplasmic portion of the chain corresponds to 254–272 (QVLRNNEMKKFKEVQTEKK). A helical transmembrane segment spans residues 273–297 (ATVLVLAVLGLFVLCWFPFQISTFL). Topologically, residues 298-316 (DTLLRLGVLSGCWNERAVD) are extracellular. A helical membrane pass occupies residues 317 to 340 (IVTQISSYVAYSNSCLNPLVYVIV). Residues 341–396 (GKRFRKKSREVYQAICRKGGCMGESVQMENSMGTLRTSISVDRQIHKLQDWAGNKQ) lie on the Cytoplasmic side of the membrane. Position 352 is a phosphotyrosine (Y352). Residue C356 is the site of S-palmitoyl cysteine attachment. Phosphoserine is present on residues S365 and S371. T374 is subject to Phosphothreonine. 2 positions are modified to phosphoserine; by GRK6: S378 and S380.

It belongs to the G-protein coupled receptor 1 family. Bradykinin receptor subfamily. BDKRB2 sub-subfamily. In terms of assembly, forms a complex with PECAM1 and GNAQ. Interacts with PECAM1. In terms of processing, diphosphorylation at Ser-365 and Ser-371, at Ser-378 and Ser-380, and at Thr-374 and Ser-380 seem to be correlated pairwise. Post-translationally, palmitoylation at Cys-356 and phosphorylation at Tyr-352 seem to be mutually exclusive. As to expression, uterus, vas deferens, kidney, ileum, heart, testis, lung and brain.

The protein resides in the cell membrane. Receptor for bradykinin. It is associated with G proteins that activate a phosphatidylinositol-calcium second messenger system. The chain is B2 bradykinin receptor (Bdkrb2) from Rattus norvegicus (Rat).